The chain runs to 1491 residues: Chromosome partition protein MukB (1491 aa).

34–41 (GGNGAGKS) lines the ATP pocket. Coiled-coil stretches lie at residues 302 to 450 (LIEQ…LKAE), 490 to 600 (ARSE…RFES), 781 to 806 (RAAR…AKAS), 836 to 1109 (EQAL…DLRT), and 1210 to 1239 (VEAI…ISSD). The interval 667-784 (PGGSNDPRLK…AIPLFGRAAR (118 aa)) is flexible hinge. The segment at 1059–1080 (QRRRDELQERLHTSRSRKSEYE) is disordered.

It belongs to the SMC family. MukB subfamily. As to quaternary structure, homodimerization via its hinge domain. Binds to DNA via its C-terminal region. Interacts, and probably forms a ternary complex, with MukE and MukF via its C-terminal region. The complex formation is stimulated by calcium or magnesium. Interacts with tubulin-related protein FtsZ.

It localises to the cytoplasm. The protein localises to the nucleoid. Plays a central role in chromosome condensation, segregation and cell cycle progression. Functions as a homodimer, which is essential for chromosome partition. Involved in negative DNA supercoiling in vivo, and by this means organize and compact chromosomes. May achieve or facilitate chromosome segregation by condensation DNA from both sides of a centrally located replisome during cell division. In Vibrio cholerae serotype O1 (strain ATCC 39315 / El Tor Inaba N16961), this protein is Chromosome partition protein MukB.